A 352-amino-acid polypeptide reads, in one-letter code: Nicotinate-nucleotide--dimethylbenzimidazole phosphoribosyltransferase (352 aa).

Glutamate 316 serves as the catalytic Proton acceptor.

This sequence belongs to the CobT family.

It catalyses the reaction 5,6-dimethylbenzimidazole + nicotinate beta-D-ribonucleotide = alpha-ribazole 5'-phosphate + nicotinate + H(+). The protein operates within nucleoside biosynthesis; alpha-ribazole biosynthesis; alpha-ribazole from 5,6-dimethylbenzimidazole: step 1/2. Its function is as follows. Catalyzes the synthesis of alpha-ribazole-5'-phosphate from nicotinate mononucleotide (NAMN) and 5,6-dimethylbenzimidazole (DMB). The protein is Nicotinate-nucleotide--dimethylbenzimidazole phosphoribosyltransferase of Clostridium acetobutylicum (strain ATCC 824 / DSM 792 / JCM 1419 / IAM 19013 / LMG 5710 / NBRC 13948 / NRRL B-527 / VKM B-1787 / 2291 / W).